Consider the following 183-residue polypeptide: Large ribosomal subunit protein uL6 (183 aa).

The protein belongs to the universal ribosomal protein uL6 family. Part of the 50S ribosomal subunit.

Functionally, this protein binds to the 23S rRNA, and is important in its secondary structure. It is located near the subunit interface in the base of the L7/L12 stalk, and near the tRNA binding site of the peptidyltransferase center. This chain is Large ribosomal subunit protein uL6, found in Malacoplasma penetrans (strain HF-2) (Mycoplasma penetrans).